The primary structure comprises 312 residues: Malate dehydrogenase (312 aa).

Residues 12–17 (GAGFTG) and D36 each bind NAD(+). Residues R87 and R93 each contribute to the substrate site. Residues N100 and 123-125 (LTN) each bind NAD(+). Residue N125 coordinates substrate. S149 carries the post-translational modification Phosphoserine. R156 contributes to the substrate binding site. H180 (proton acceptor) is an active-site residue.

It belongs to the LDH/MDH superfamily. MDH type 3 family.

The enzyme catalyses (S)-malate + NAD(+) = oxaloacetate + NADH + H(+). Its function is as follows. Catalyzes the reversible oxidation of malate to oxaloacetate. The chain is Malate dehydrogenase from Geobacillus thermodenitrificans (strain NG80-2).